We begin with the raw amino-acid sequence, 156 residues long: ATP synthase subunit b (156 aa).

The helical transmembrane segment at Leu-7–Leu-29 threads the bilayer.

It belongs to the ATPase B chain family. In terms of assembly, F-type ATPases have 2 components, F(1) - the catalytic core - and F(0) - the membrane proton channel. F(1) has five subunits: alpha(3), beta(3), gamma(1), delta(1), epsilon(1). F(0) has three main subunits: a(1), b(2) and c(10-14). The alpha and beta chains form an alternating ring which encloses part of the gamma chain. F(1) is attached to F(0) by a central stalk formed by the gamma and epsilon chains, while a peripheral stalk is formed by the delta and b chains.

It is found in the cell inner membrane. In terms of biological role, f(1)F(0) ATP synthase produces ATP from ADP in the presence of a proton or sodium gradient. F-type ATPases consist of two structural domains, F(1) containing the extramembraneous catalytic core and F(0) containing the membrane proton channel, linked together by a central stalk and a peripheral stalk. During catalysis, ATP synthesis in the catalytic domain of F(1) is coupled via a rotary mechanism of the central stalk subunits to proton translocation. Its function is as follows. Component of the F(0) channel, it forms part of the peripheral stalk, linking F(1) to F(0). This chain is ATP synthase subunit b, found in Burkholderia pseudomallei (strain 668).